A 353-amino-acid polypeptide reads, in one-letter code: Chloroplastic lipocalin (353 aa).

Residues 1-18 (MILLSSSISLSRPVSSQS) are compositionally biased toward low complexity. Positions 1–27 (MILLSSSISLSRPVSSQSFSPPAATST) are disordered. A chloroplast-targeting transit peptide spans 1–39 (MILLSSSISLSRPVSSQSFSPPAATSTRRSHSSVTVKCC). A disulfide bridge connects residues cysteine 163 and cysteine 299.

It belongs to the calycin superfamily. Lipocalin family. Expressed in leaves at low levels (at protein levels). Present in seeds.

The protein localises to the plastid. It is found in the chloroplast thylakoid lumen. Its function is as follows. Lipocalin that prevents thylakoidal membrane lipids peroxidation and confers protection against oxidative stress, especially mediated by singlet oxygen in response to high light and other stress (e.g. heat shocks). Required for seed longevity by ensuring polyunsaturated lipids integrity. This Arabidopsis thaliana (Mouse-ear cress) protein is Chloroplastic lipocalin.